The chain runs to 467 residues: Argininosuccinate lyase (467 aa).

Belongs to the lyase 1 family. Argininosuccinate lyase subfamily.

The protein resides in the cytoplasm. It carries out the reaction 2-(N(omega)-L-arginino)succinate = fumarate + L-arginine. It participates in amino-acid biosynthesis; L-arginine biosynthesis; L-arginine from L-ornithine and carbamoyl phosphate: step 3/3. The chain is Argininosuccinate lyase from Anaeromyxobacter dehalogenans (strain 2CP-C).